The chain runs to 297 residues: Nucleotide-binding protein Bsph_0448 (297 aa).

Gly-19–Thr-26 contacts ATP. Asp-70–Gly-73 provides a ligand contact to GTP.

The protein belongs to the RapZ-like family.

Displays ATPase and GTPase activities. The sequence is that of Nucleotide-binding protein Bsph_0448 from Lysinibacillus sphaericus (strain C3-41).